A 191-amino-acid polypeptide reads, in one-letter code: Large ribosomal subunit protein uL5 (191 aa).

It belongs to the universal ribosomal protein uL5 family. Part of the 50S ribosomal subunit; part of the 5S rRNA/L5/L18/L25 subcomplex. Contacts the 5S rRNA and the P site tRNA. Forms a bridge to the 30S subunit in the 70S ribosome.

In terms of biological role, this is one of the proteins that bind and probably mediate the attachment of the 5S RNA into the large ribosomal subunit, where it forms part of the central protuberance. In the 70S ribosome it contacts protein S13 of the 30S subunit (bridge B1b), connecting the 2 subunits; this bridge is implicated in subunit movement. Contacts the P site tRNA; the 5S rRNA and some of its associated proteins might help stabilize positioning of ribosome-bound tRNAs. This is Large ribosomal subunit protein uL5 from Thermobifida fusca (strain YX).